The sequence spans 363 residues: Protein RecA (363 aa).

Residue 66–73 (GPESSGKT) coordinates ATP. The tract at residues 327–363 (YGIDEKSIADRENPEKIKEKREETSEENKTDNSEKTK) is disordered. Residues 329–363 (IDEKSIADRENPEKIKEKREETSEENKTDNSEKTK) show a composition bias toward basic and acidic residues.

This sequence belongs to the RecA family.

It localises to the cytoplasm. Its function is as follows. Can catalyze the hydrolysis of ATP in the presence of single-stranded DNA, the ATP-dependent uptake of single-stranded DNA by duplex DNA, and the ATP-dependent hybridization of homologous single-stranded DNAs. It interacts with LexA causing its activation and leading to its autocatalytic cleavage. This is Protein RecA from Lactobacillus acidophilus (strain ATCC 700396 / NCK56 / N2 / NCFM).